The following is a 121-amino-acid chain: MANLQSKSSSAKRKRRHFRVRAKINGTTSVPRLNVFKSNGHFYAQLIDDVKQKTIVAASTLKMTGLKSTSNIAAAEKVGDEIAKKALDKKVTTVVFDRGGYLYHGKVKAFAEAARKAGLKF.

Belongs to the universal ribosomal protein uL18 family. As to quaternary structure, part of the 50S ribosomal subunit; part of the 5S rRNA/L5/L18/L25 subcomplex. Contacts the 5S and 23S rRNAs.

Its function is as follows. This is one of the proteins that bind and probably mediate the attachment of the 5S RNA into the large ribosomal subunit, where it forms part of the central protuberance. The protein is Large ribosomal subunit protein uL18 of Spiroplasma kunkelii.